The primary structure comprises 122 residues: Small ribosomal subunit protein uS13 (122 aa).

The tract at residues 89–122 (GLRHRRGLPARGQRTKTNARTRKGPRRGVAGKRK) is disordered.

This sequence belongs to the universal ribosomal protein uS13 family. In terms of assembly, part of the 30S ribosomal subunit. Forms a loose heterodimer with protein S19. Forms two bridges to the 50S subunit in the 70S ribosome.

Located at the top of the head of the 30S subunit, it contacts several helices of the 16S rRNA. In the 70S ribosome it contacts the 23S rRNA (bridge B1a) and protein L5 of the 50S subunit (bridge B1b), connecting the 2 subunits; these bridges are implicated in subunit movement. Contacts the tRNAs in the A and P-sites. The chain is Small ribosomal subunit protein uS13 from Oleidesulfovibrio alaskensis (strain ATCC BAA-1058 / DSM 17464 / G20) (Desulfovibrio alaskensis).